The chain runs to 331 residues: PDZ and LIM domain protein 4 (331 aa).

Positions M1 to E84 constitute a PDZ domain. 3 disordered regions span residues V80 to A99, D105 to S152, and A221 to L243. Residues S112, S116, S120, and S135 each carry the phosphoserine modification. The LIM zinc-binding domain occupies P254–P313.

In terms of assembly, homodimer. Interacts (via C-terminus only or via combined C-terminus and LIM domain, but not LIM domain only) with PTPN13 (via the second or fourth PDZ domains). Found in a complex with PTPN13 and TRIP6. Interacts (via PDZ domain) with ACTN1 and ACTN2 (via C-terminal SDL residues). Interacts (via PDZ domain) with TRIP6 (via the second LIM domain or via the third LIM domain plus C-terminus). Interacts (via LIM domain) with GRIA1 (via C-terminus); this interaction as well as the interaction with alpha-actinin is required for their colocalization in early endosomes. Interacts with PDLIM1. Forms (via LIM domain) a heterodimer with PDLIM3. Interacts directly with SRC (via kinase domain and to a lesser extent the SH2 domain). Post-translationally, phosphorylated on tyrosine residue(s). Can be dephosphorylated by PTPN13.

Its subcellular location is the cytoplasm. It is found in the cytoskeleton. The protein localises to the cell projection. It localises to the dendritic spine. The protein resides in the early endosome membrane. Its subcellular location is the recycling endosome membrane. It is found in the nucleus. The protein localises to the perinuclear region. It localises to the lamellipodium. The protein resides in the synapse. Its subcellular location is the synaptosome. Functionally, suppresses SRC activation by recognizing and binding to active SRC and facilitating PTPN13-mediated dephosphorylation of SRC 'Tyr-419' leading to its inactivation. Inactivated SRC dissociates from this protein allowing the initiation of a new SRC inactivation cycle. Involved in reorganization of the actin cytoskeleton. In nonmuscle cells, binds to ACTN1 (alpha-actinin-1), increases the affinity of ACTN1 to F-actin (filamentous actin), and promotes formation of actin stress fibers. Involved in regulation of the synaptic AMPA receptor transport in dendritic spines of hippocampal pyramidal neurons directing the receptors toward an insertion at the postsynaptic membrane. Links endosomal surface-internalized GRIA1-containing AMPA receptors to the alpha-actinin/actin cytoskeleton. Increases AMPA receptor-mediated excitatory postsynaptic currents in neurons. The protein is PDZ and LIM domain protein 4 (PDLIM4) of Bos taurus (Bovine).